We begin with the raw amino-acid sequence, 456 residues long: Serine/threonine-protein kinase PBS1 (456 aa).

The interval 1 to 57 (MGCFSCFDSSDDEKLNPVDESNHGQKKQSQPTVSNNISGLPSGGEKLSSKTNGGSKR) is disordered. G2 is lipidated: N-myristoyl glycine. Residues C3 and C6 are each lipidated (S-palmitoyl cysteine). Basic and acidic residues predominate over residues 12–23 (DEKLNPVDESNH). S21 is subject to Phosphoserine. Residues 27-39 (KQSQPTVSNNISG) are compositionally biased toward polar residues. The Protein kinase domain occupies 86 to 363 (FHPDTFLGEG…ADVVTALSYL (278 aa)). Residues 92-100 (LGEGGFGRV) and K115 contribute to the ATP site. Residue Y160 is modified to Phosphotyrosine. The active-site Proton acceptor is D213. 2 positions are modified to phosphoserine: S217 and S247. A phosphothreonine mark is found at T248 and T253. The residue at position 261 (Y261) is a Phosphotyrosine. The Recognition motif required for RPS5-mediated plant resistance to P.syringae signature appears at 292–296 (SEMPH). The interval 368 to 456 (YDPSKDDSRR…QGTSESNSTG (89 aa)) is disordered. Basic and acidic residues-rich tracts occupy residues 370–392 (PSKDDSRRNRDERGARLITRNDD) and 400–429 (FDLEGSEKEDSPRETARILNRDINRERAVA). Polar residues predominate over residues 446–456 (EQGTSESNSTG).

Belongs to the protein kinase superfamily. Ser/Thr protein kinase family. As to quaternary structure, in infected plant cells, it interacts with the P.syringae virulence protein avrPphB. In uninfected plants, autophosphorylated form interacts with RPS5. Interacts with FLS2. Cleaved by avrPphB in infected plant cells. Its cleavage serves as a signal that triggers the RPS5-mediated defense system. In terms of processing, autophosphorylates. Autophosphorylation may be required to trigger the RPS5-mediated plant defense system. Post-translationally, palmitoylation at Cys-3 and Cys-6 are required for plasma membrane location that is essential for the RPS5-mediated plant defense response.

It localises to the cell membrane. It carries out the reaction L-seryl-[protein] + ATP = O-phospho-L-seryl-[protein] + ADP + H(+). The catalysed reaction is L-threonyl-[protein] + ATP = O-phospho-L-threonyl-[protein] + ADP + H(+). Functionally, protein kinase required for plant defense mechanism mediated by the disease resistance (R) protein RPS5. In case of infection by Pseudomonas syringae, AvrPphB triggers RPS5-mediated defense mechanism via the cleavage of PBS1. Both kinase activity and cleavage by avrPphB are independently required to trigger the RPS5-mediated resistance. Contributes to PAMP-triggered immunity (PTI) signaling and defense responses downstream of FLS2. The protein is Serine/threonine-protein kinase PBS1 of Arabidopsis thaliana (Mouse-ear cress).